The sequence spans 1433 residues: DNA polymerase III PolC-type (1433 aa).

One can recognise an Exonuclease domain in the interval 419–575; sequence FVVFDVETTG…YDAEATGHLL (157 aa).

This sequence belongs to the DNA polymerase type-C family. PolC subfamily.

The protein localises to the cytoplasm. It carries out the reaction DNA(n) + a 2'-deoxyribonucleoside 5'-triphosphate = DNA(n+1) + diphosphate. Its function is as follows. Required for replicative DNA synthesis. This DNA polymerase also exhibits 3' to 5' exonuclease activity. This Halalkalibacterium halodurans (strain ATCC BAA-125 / DSM 18197 / FERM 7344 / JCM 9153 / C-125) (Bacillus halodurans) protein is DNA polymerase III PolC-type.